Here is a 142-residue protein sequence, read N- to C-terminus: Large ribosomal subunit protein uL11 (142 aa).

Belongs to the universal ribosomal protein uL11 family. As to quaternary structure, part of the ribosomal stalk of the 50S ribosomal subunit. Interacts with L10 and the large rRNA to form the base of the stalk. L10 forms an elongated spine to which L12 dimers bind in a sequential fashion forming a multimeric L10(L12)X complex. In terms of processing, one or more lysine residues are methylated.

Its function is as follows. Forms part of the ribosomal stalk which helps the ribosome interact with GTP-bound translation factors. In Bartonella tribocorum (strain CIP 105476 / IBS 506), this protein is Large ribosomal subunit protein uL11.